A 1447-amino-acid polypeptide reads, in one-letter code: ATP-dependent helicase SGS1 (1447 aa).

Disordered stretches follow at residues 37-78, 243-264, 342-430, 552-572, and 601-639; these read IANK…TATK, KKDGMSKDQSKGRSQVSSQDDN, KEGA…EEKE, KENEDFEEDNNNNGIEYLSDS, and TERKLTGDNEHPPPSWSPKIKREKSSVSQKDEEDDFDDD. Residues 59-78 show a composition bias toward polar residues; sequence GTTNFITSIPASGPTNTATK. The span at 243–253 shows a compositional bias: basic and acidic residues; that stretch reads KKDGMSKDQSK. The segment covering 254 to 264 has biased composition (polar residues); it reads GRSQVSSQDDN. Over residues 363 to 386 the composition is skewed to basic and acidic residues; sequence ELTRRRNMRSREPVNYRIPDRDDP. 2 stretches are compositionally biased toward acidic residues: residues 403–415 and 552–561; these read EREEDELTMEAED and KENEDFEEDN. The span at 601–611 shows a compositional bias: basic and acidic residues; sequence TERKLTGDNEH. Positions 687 to 864 constitute a Helicase ATP-binding domain; it reads VNATLQGKDV…IHNLELKEPV (178 aa). ATP is bound at residue 714 to 721; it reads AVVKSGKT. The DEAH box signature appears at 808–811; it reads DEAH. Positions 886-1035 constitute a Helicase C-terminal domain; it reads TIFEICDAVK…NKEKHLNKLQ (150 aa). An HRDC domain is found at 1272-1351; sequence LNNLRMTYER…ADLSKKRSSE (80 aa). Residues 1402–1411 are compositionally biased toward polar residues; sequence QIRQSQLPKN. Residues 1402–1447 are disordered; the sequence is QIRQSQLPKNTTSSKSGTRSISKSSKKSANGRRGFRNYRGHYRGRK. Low complexity predominate over residues 1412 to 1424; it reads TTSSKSGTRSISK. Over residues 1425–1447 the composition is skewed to basic residues; that stretch reads SSKKSANGRRGFRNYRGHYRGRK.

This sequence belongs to the helicase family. RecQ subfamily. In terms of assembly, heterodimer with TOP3. Forms a complex with TOP3 and RMI1. Forms a ternary complex with a MLH1-MLH3 heterodimer (MutLbeta) during meiosis. Interacts with TOP2. It depends on Mg(2+) as a cofactor.

It localises to the nucleus. The protein resides in the nucleolus. It carries out the reaction Couples ATP hydrolysis with the unwinding of duplex DNA by translocating in the 3'-5' direction.. The enzyme catalyses ATP + H2O = ADP + phosphate + H(+). Its activity is regulated as follows. Helicase activity on G-quadruplex DNA is inhibited by ATP-gamma-S. ATP-dependent 3'-5' DNA helicase able to unwind duplex DNA or DNA:RNA heteroduplex. Unwinds G-quadruplex DNA; unwinding occurs in the 3'-5' direction, requires a 3' single-stranded end of at least 7 nucleotides. Helicase activity is higher on G-quadruplex substrates than on duplex DNA substrates. Assayed with a catalytic fragment (residues 400-1268). Telomeres and rDNA are notably G-rich; formation of G-quadruplex DNA would block DNA replication and transcription. Acts as an integral component of the S-phase checkpoint response, which arrests cells due to DNA damage or blocked fork progression during DNA replication. Can create a deleterious topological substrate that TOP3 preferentially resolves. The TOP3-SGS1 protein complex may function as a eukaryotic reverse gyrase introducing positive supercoils into extrachromosomal ribosomal DNA rings. Together with topoisomerase II has a role in chromosomal segregation. Maintains rDNA structure where it has a role in re-starting stalled replication forks. The polypeptide is ATP-dependent helicase SGS1 (Saccharomyces cerevisiae (strain ATCC 204508 / S288c) (Baker's yeast)).